A 111-amino-acid chain; its full sequence is MARKRQRRRRRKVTRSQRAELQFPVSRVDRFLREGNYSRRLSSSAPVFLAGVLEYLTSNILELAGEVAHTTGRKRIAPEHVCRVVQNNEQLHQLFKQGGTSVFEPPEPDDN.

The protein belongs to the histone H2A family. In terms of assembly, the nucleosome is a histone octamer containing two molecules each of H2A, H2B, H3 and H4 assembled in one H3-H4 heterotetramer and two H2A-H2B heterodimers. Incorporated into nucleosomes during late spermatogenesis. Interacts with H2BC1/TH2B; preferentially dimerizes with H2BC1/TH2B to form nucleosomes. In terms of tissue distribution, highly expressed in adult testis, mainly in spermatocytes.

It is found in the nucleus. The protein resides in the chromosome. In terms of biological role, atypical histone H2A which replaces conventional H2A during late spermatogenesis and is involved in the replacement of histones to protamine in male germ cells. Core component of nucleosome: nucleosomes wrap and compact DNA into chromatin, limiting DNA accessibility to the cellular machineries which require DNA as a template. Nucleosomes containing H2AB1 only wrap 130 bp of DNA, compared to 147 bp for classical nucleosomes. In condensing spermatids, the heterodimer between H2AB1 and H2BC1/TH2B is loaded onto the nucleosomes and promotes loading of transition proteins (TNP1 and TNP2) onto the nucleosomes. Inclusion of the H2AB1-H2BC1/TH2B dimer into chromatin opens the nucleosomes, releasing the nucleosomal DNA ends and allowing the invasion of nucleosomes by transition proteins (TNP1 and TNP2). Then, transition proteins drive the recruitment and processing of protamines, which are responsible for histone eviction. The protein is Histone H2A-Bbd type 1 (H2ab1) of Mus musculus (Mouse).